The primary structure comprises 315 residues: 3-oxoacyl-[acyl-carrier-protein] reductase 3, chloroplastic (315 aa).

The transit peptide at 1-55 directs the protein to the chloroplast; sequence MATTVAATKLTSLKAVKKLGFREIRQVRQWTPLQSSMPHFGSRQSFATSTVVKAQ. 77 to 101 serves as a coordination point for NADP(+); it reads VTGASRGIGKAIALSLGKAGCKVLV. Residue Ser-209 participates in substrate binding. The Proton acceptor role is filled by Tyr-222.

It belongs to the short-chain dehydrogenases/reductases (SDR) family. As to quaternary structure, homotetramer.

Its subcellular location is the plastid. The protein resides in the chloroplast. The enzyme catalyses a (3R)-hydroxyacyl-[ACP] + NADP(+) = a 3-oxoacyl-[ACP] + NADPH + H(+). The protein operates within lipid metabolism; fatty acid biosynthesis. This chain is 3-oxoacyl-[acyl-carrier-protein] reductase 3, chloroplastic (bkr3), found in Brassica napus (Rape).